The sequence spans 185 residues: MISAGDLRKGNTFELDGQVYTVVDFLHVKPGKGAAFVRTKLRNVLNGGLKETTFNPTEKFQEAVIERKEMQYLYTDGELYYFMDQQTFEQIPLNFEQVEGAIKFLKENMFAIIKFYKGEAFSVEAPNFVELQITHTDPGAKGNTATNVMKPATVETGAVVHVPLFINEGDSIRIDTRTGEYMERV.

The protein belongs to the elongation factor P family.

Its subcellular location is the cytoplasm. It participates in protein biosynthesis; polypeptide chain elongation. Involved in peptide bond synthesis. Stimulates efficient translation and peptide-bond synthesis on native or reconstituted 70S ribosomes in vitro. Probably functions indirectly by altering the affinity of the ribosome for aminoacyl-tRNA, thus increasing their reactivity as acceptors for peptidyl transferase. The sequence is that of Elongation factor P from Clostridium tetani (strain Massachusetts / E88).